The following is a 647-amino-acid chain: Versicolorin B synthase (647 aa).

The first 26 residues, 1–26 (MALSTILTAAAMPVAGLFAFAQQSSA), serve as a signal peptide directing secretion. FAD-binding positions include 85–86 (TA) and 106–107 (EA). Residue N117 is glycosylated (N-linked (GlcNAc...) asparagine). 172–175 (GAML) serves as a coordination point for FAD. N-linked (GlcNAc...) asparagine glycans are attached at residues N222 and N509. FAD contacts are provided by residues A617 and 628–629 (PM).

This sequence belongs to the GMC oxidoreductase family. Homodimer. It depends on FAD as a cofactor.

Its subcellular location is the cytoplasm. The protein localises to the cytosol. The enzyme catalyses (2S-3S)-versiconal hemiacetal = versicolorin B + H2O. The catalysed reaction is (S)-5'-oxoaverantin + H(+) = (1'S,5'S)-averufin + H2O. The protein operates within mycotoxin biosynthesis. Its function is as follows. Versicolorin B synthase; part of the fragmented gene cluster that mediates the biosynthesis of dothistromin (DOTH), a polyketide toxin very similar in structure to the aflatoxin precursor, versicolorin B. The first step of the pathway is the conversion of acetate to norsolorinic acid (NOR) and requires the fatty acid synthase subunits hexA and hexB, as well as the polyketide synthase pksA. PksA combines a hexanoyl starter unit and 7 malonyl-CoA extender units to synthesize the precursor NOR. The hexanoyl starter unit is provided to the acyl-carrier protein (ACP) domain by the fungal fatty acid synthase hexA/hexB. The second step is the conversion of NOR to averantin (AVN) and requires the norsolorinic acid ketoreductase nor1, which catalyzes the dehydration of norsolorinic acid to form (1'S)-averantin. The cytochrome P450 monooxygenase avnA then catalyzes the hydroxylation of AVN to 5'hydroxyaverantin (HAVN). The next step is performed by adhA that transforms HAVN to averufin (AVF). Averufin might then be converted to hydroxyversicolorone by cypX and avfA. Hydroxyversicolorone is further converted versiconal hemiacetal acetate (VHA) by moxY. VHA is then the substrate for the versiconal hemiacetal acetate esterase est1 to yield versiconal (VAL). Versicolorin B synthase vbsA then converts VAL to versicolorin B (VERB) by closing the bisfuran ring. Then, the activity of the versicolorin B desaturase verB leads to versicolorin A (VERA). DotB, a predicted chloroperoxidase, may perform epoxidation of the A-ring of VERA. Alternatively, a cytochrome P450, such as cypX or avnA could catalyze this step. It is also possible that another, uncharacterized, cytochrome P450 enzyme is responsible for this step. Opening of the epoxide could potentially be achieved by the epoxide hydrolase epoA. However, epoA seems not to be required for DOTH biosynthesis, but other epoxide hydrolases may have the ability to complement this hydrolysis. Alternatively, opening of the epoxide ring could be achieved non-enzymatically. The next step is the deoxygenation of ring A to yield the 5,8-dihydroxyanthraquinone which is most likely catalyzed by the NADPH dehydrogenase encoded by ver1. The last stages of DOTH biosynthesis are proposed to involve hydroxylation of the bisfuran. OrdB and norB might have oxidative roles here. An alternative possibility is that cytochrome P450 monoogenases such as avnA and cypX might perform these steps in addition to previously proposed steps. The chain is Versicolorin B synthase from Dothistroma septosporum (Red band needle blight fungus).